Consider the following 126-residue polypeptide: Histone H2B type 1-D (126 aa).

The segment covering 1–12 (MPEPTKSAPAPK) has biased composition (low complexity). Positions 1–36 (MPEPTKSAPAPKKGSKKAVTKAQKKDGKKRKRSRKE) are disordered. At proline 2 the chain carries N-acetylproline. Position 3 is an ADP-ribosyl glutamic acid (glutamate 3). Lysine 6 is subject to N6-(2-hydroxyisobutyryl)lysine; alternate. Lysine 6 carries the post-translational modification N6-(beta-hydroxybutyryl)lysine; alternate. An N6-acetyllysine; alternate modification is found at lysine 6. Lysine 6 carries the N6-butyryllysine; alternate modification. Residue lysine 6 is modified to N6-crotonyllysine; alternate. Lysine 6 carries the N6-lactoyllysine; alternate modification. Lysine 6 is covalently cross-linked (Glycyl lysine isopeptide (Lys-Gly) (interchain with G-Cter in SUMO2); alternate). Position 7 is an ADP-ribosylserine (serine 7). An N6-(beta-hydroxybutyryl)lysine; alternate modification is found at lysine 12. Lysine 12 and lysine 13 each carry N6-acetyllysine; alternate. Residues lysine 12 and lysine 13 each carry the N6-crotonyllysine; alternate modification. Lysine 12 is modified (N6-lactoyllysine; alternate). Lysine 13 is subject to N6-(2-hydroxyisobutyryl)lysine; alternate. Serine 15 bears the Phosphoserine; by STK4/MST1 mark. 4 positions are modified to N6-acetyllysine; alternate: lysine 16, lysine 17, lysine 21, and lysine 24. 4 positions are modified to N6-crotonyllysine; alternate: lysine 16, lysine 17, lysine 21, and lysine 24. 4 positions are modified to N6-lactoyllysine; alternate: lysine 16, lysine 17, lysine 21, and lysine 24. Lysine 17 and lysine 21 each carry N6-(beta-hydroxybutyryl)lysine; alternate. Lysine 17 carries the post-translational modification N6-glutaryllysine; alternate. N6-(2-hydroxyisobutyryl)lysine; alternate is present on residues lysine 21 and lysine 24. At lysine 21 the chain carries N6-butyryllysine; alternate. Lysine 21 is covalently cross-linked (Glycyl lysine isopeptide (Lys-Gly) (interchain with G-Cter in SUMO2); alternate). Lysine 25 carries the post-translational modification N6-(2-hydroxyisobutyryl)lysine. The residue at position 35 (lysine 35) is an N6-(2-hydroxyisobutyryl)lysine; alternate. An N6-(beta-hydroxybutyryl)lysine; alternate modification is found at lysine 35. The residue at position 35 (lysine 35) is an N6-crotonyllysine; alternate. Lysine 35 is modified (N6-glutaryllysine; alternate). Residue lysine 35 is modified to N6-succinyllysine; alternate. Lysine 35 participates in a covalent cross-link: Glycyl lysine isopeptide (Lys-Gly) (interchain with G-Cter in ubiquitin); alternate. A PolyADP-ribosyl glutamic acid modification is found at glutamate 36. Serine 37 is subject to Phosphoserine; by AMPK. N6-(2-hydroxyisobutyryl)lysine; alternate is present on residues lysine 44, lysine 47, and lysine 58. Lysine 44 carries the N6-lactoyllysine; alternate modification. Lysine 44 and lysine 47 each carry N6-glutaryllysine; alternate. At lysine 47 the chain carries N6-methyllysine; alternate. Lysine 58 carries the N6,N6-dimethyllysine; alternate modification. At arginine 80 the chain carries Dimethylated arginine. At lysine 86 the chain carries N6-(2-hydroxyisobutyryl)lysine; alternate. Lysine 86 is modified (N6-(beta-hydroxybutyryl)lysine; alternate). Lysine 86 is subject to N6-acetyllysine; alternate. Lysine 86 carries the N6-lactoyllysine; alternate modification. N6,N6,N6-trimethyllysine; alternate is present on lysine 86. An omega-N-methylarginine mark is found at arginine 87 and arginine 93. Lysine 109 is subject to N6-(2-hydroxyisobutyryl)lysine; alternate. Lysine 109 is subject to N6-lactoyllysine; alternate. The residue at position 109 (lysine 109) is an N6-glutaryllysine; alternate. N6-methyllysine; alternate is present on lysine 109. Serine 113 is a glycosylation site (O-linked (GlcNAc) serine). Threonine 116 bears the Phosphothreonine mark. Residues lysine 117 and lysine 121 each carry the N6-(2-hydroxyisobutyryl)lysine; alternate modification. N6-(beta-hydroxybutyryl)lysine; alternate is present on residues lysine 117 and lysine 121. Lysine 117 and lysine 121 each carry N6-lactoyllysine; alternate. An N6-glutaryllysine; alternate mark is found at lysine 117 and lysine 121. Residues lysine 117 and lysine 121 each carry the N6-succinyllysine; alternate modification. Lysine 117 is subject to N6-malonyllysine; alternate. An N6-methylated lysine; alternate modification is found at lysine 117. Lysine 121 participates in a covalent cross-link: Glycyl lysine isopeptide (Lys-Gly) (interchain with G-Cter in ubiquitin); alternate.

Belongs to the histone H2B family. As to quaternary structure, the nucleosome is a histone octamer containing two molecules each of H2A, H2B, H3 and H4 assembled in one H3-H4 heterotetramer and two H2A-H2B heterodimers. The octamer wraps approximately 147 bp of DNA. Post-translationally, monoubiquitination at Lys-35 (H2BK34Ub) by the MSL1/MSL2 dimer is required for histone H3 'Lys-4' (H3K4me) and 'Lys-79' (H3K79me) methylation and transcription activation at specific gene loci, such as HOXA9 and MEIS1 loci. Similarly, monoubiquitination at Lys-121 (H2BK120Ub) by the RNF20/40 complex gives a specific tag for epigenetic transcriptional activation and is also prerequisite for histone H3 'Lys-4' and 'Lys-79' methylation. It also functions cooperatively with the FACT dimer to stimulate elongation by RNA polymerase II. H2BK120Ub also acts as a regulator of mRNA splicing: deubiquitination by USP49 is required for efficient cotranscriptional splicing of a large set of exons. Phosphorylation at Ser-37 (H2BS36ph) by AMPK in response to stress promotes transcription. Phosphorylated on Ser-15 (H2BS14ph) by STK4/MST1 during apoptosis; which facilitates apoptotic chromatin condensation. Also phosphorylated on Ser-15 in response to DNA double strand breaks (DSBs), and in correlation with somatic hypermutation and immunoglobulin class-switch recombination. In terms of processing, glcNAcylation at Ser-113 promotes monoubiquitination of Lys-121. It fluctuates in response to extracellular glucose, and associates with transcribed genes. Post-translationally, ADP-ribosylated by PARP1 or PARP2 on Ser-7 (H2BS6ADPr) in response to DNA damage. H2BS6ADPr promotes recruitment of CHD1L. Mono-ADP-ribosylated on Glu-3 (H2BE2ADPr) by PARP3 in response to single-strand breaks. Poly ADP-ribosylation on Glu-36 (H2BE35ADPr) by PARP1 regulates adipogenesis: it inhibits phosphorylation at Ser-37 (H2BS36ph), thereby blocking expression of pro-adipogenetic genes. Crotonylation (Kcr) is specifically present in male germ cells and marks testis-specific genes in post-meiotic cells, including X-linked genes that escape sex chromosome inactivation in haploid cells. Crotonylation marks active promoters and enhancers and confers resistance to transcriptional repressors. It is also associated with post-meiotically activated genes on autosomes. In terms of processing, lactylated in macrophages by EP300/P300 by using lactoyl-CoA directly derived from endogenous or exogenous lactate, leading to stimulates gene transcription.

It localises to the nucleus. It is found in the chromosome. Functionally, core component of nucleosome. Nucleosomes wrap and compact DNA into chromatin, limiting DNA accessibility to the cellular machineries which require DNA as a template. Histones thereby play a central role in transcription regulation, DNA repair, DNA replication and chromosomal stability. DNA accessibility is regulated via a complex set of post-translational modifications of histones, also called histone code, and nucleosome remodeling. This is Histone H2B type 1-D from Homo sapiens (Human).